The following is a 214-amino-acid chain: MASLFKKKTVDDIIREQNKELRGTQRAITRDRAALEKQEKQLEMEIKKMAKTGNKDACRVLAKQLVQLRKQKTRTYAVSSKVTSMSTQTKVMSSQMKMAGAMSTTAKTMQAVNKKMDPQKTLQTMQNFQKENMKMEMTDEMINDTLDDIFDASEDEEESQDIVNQVLDEIGIEISGKMAKAPSAAKGLPSTSAAKSKGISDEEIERQLKALGVD.

Residues 25–55 adopt a coiled-coil conformation; the sequence is QRAITRDRAALEKQEKQLEMEIKKMAKTGNK. A disordered region spans residues 178-200; the sequence is MAKAPSAAKGLPSTSAAKSKGIS. The MIT-interacting motif motif lies at 202-212; the sequence is EEIERQLKALG.

The protein belongs to the SNF7 family. In terms of assembly, probable core component of the endosomal sorting required for transport complex III (ESCRT-III). ESCRT-III components are thought to multimerize to form a flat lattice on the perimeter membrane of the endosome.

It localises to the cytoplasm. It is found in the cytosol. The protein localises to the late endosome membrane. Probable core component of the endosomal sorting required for transport complex III (ESCRT-III) which is involved in multivesicular bodies (MVBs) formation and sorting of endosomal cargo proteins into MVBs. MVBs contain intraluminal vesicles (ILVs) that are generated by invagination and scission from the limiting membrane of the endosome and mostly are delivered to lysosomes enabling degradation of membrane proteins, such as stimulated growth factor receptors, lysosomal enzymes and lipids. The sequence is that of Charged multivesicular body protein 2b-B (chmp2b-b) from Xenopus laevis (African clawed frog).